The primary structure comprises 241 residues: Thiamine import ATP-binding protein ThiQ (241 aa).

The region spanning 7 to 235 is the ABC transporter domain; sequence IRLSDVRFSY…AGPEALRHYI (229 aa). 37–44 is a binding site for ATP; sequence GPSGSGKS.

Belongs to the ABC transporter superfamily. Thiamine importer (TC 3.A.1.19.1) family. In terms of assembly, the complex is composed of two ATP-binding proteins (ThiQ), two transmembrane proteins (ThiP) and a solute-binding protein (ThiB).

It localises to the cell inner membrane. The enzyme catalyses thiamine(out) + ATP + H2O = thiamine(in) + ADP + phosphate + H(+). Functionally, part of the ABC transporter complex ThiBPQ involved in thiamine import. Responsible for energy coupling to the transport system. The sequence is that of Thiamine import ATP-binding protein ThiQ from Brucella melitensis biotype 1 (strain ATCC 23456 / CCUG 17765 / NCTC 10094 / 16M).